We begin with the raw amino-acid sequence, 214 residues long: DNA-directed RNA polymerase subunit alpha (214 aa).

It belongs to the RNA polymerase alpha chain family. In plastids the minimal PEP RNA polymerase catalytic core is composed of four subunits: alpha, beta, beta', and beta''. When a (nuclear-encoded) sigma factor is associated with the core the holoenzyme is formed, which can initiate transcription.

It is found in the plastid. It localises to the chloroplast. The enzyme catalyses RNA(n) + a ribonucleoside 5'-triphosphate = RNA(n+1) + diphosphate. Functionally, DNA-dependent RNA polymerase catalyzes the transcription of DNA into RNA using the four ribonucleoside triphosphates as substrates. In Euglena viridis (Cercaria viridis), this protein is DNA-directed RNA polymerase subunit alpha (rpoA).